Here is a 339-residue protein sequence, read N- to C-terminus: MRNPGGPGWASKRPLQKKQNTACLCAQQPARHFVPAPFNSSRQGKNTAQPTEPSLSSVIAPTLFCAFLYLACVTAELPEVSRRMATSGVRSKEGRREHAFVPEPFTGTNLAPSLWLHRFEVIDDLNHWDHATKLRFLKESLKGDALDVYNGLSSQAQGDFSFVKQALLRAFGAPGEAFSEPEEILFANSMGKGYYLKGKVGHVPVRFLVDSGAQVSVVHPALWEEVTDGDLDTLRPFNNVVKVANGAEMKILGVWDTEISLGKTKLKAEFLVANASAEEAIIGTDVLQDHNAVLDFEHRTCTLKGKKFRLLPVGSSLEDEFDLELIEEEEGSSAPEGSH.

The propeptide occupies 1–188; sequence MRNPGGPGWA…SEPEEILFAN (188 aa). The interval 34-53 is disordered; that stretch reads VPAPFNSSRQGKNTAQPTEP. Residues 38–53 show a composition bias toward polar residues; that stretch reads FNSSRQGKNTAQPTEP. A glycan (N-linked (GlcNAc...) asparagine) is linked at Asn-39. The chain crosses the membrane as a helical span at residues 55–75; sequence LSSVIAPTLFCAFLYLACVTA. Positions 205–286 constitute a Peptidase A2 domain; sequence VRFLVDSGAQ…AEEAIIGTDV (82 aa). Asp-210 is an active-site residue. N-linked (GlcNAc...) asparagine glycosylation is present at Asn-274. The propeptide occupies 325–339; the sequence is LIEEEEGSSAPEGSH.

In terms of assembly, homodimer. Post-translationally, undergoes autocleavage which is necessary for activation of the protein. Highly expressed in stratified epithelia in skin, tongue, esophagus, forestomach and vagina. Also expressed in trachea, urinary bladder and thymus. Undetectable in simple epithelia. Within the epidermis, expressed exclusively in the granular layer (at protein level). Levels are elevated in benign skin tumors but are down-regulated in squamous cell carcinomas.

Its subcellular location is the membrane. In terms of biological role, protease responsible for filaggrin processing, essential for the maintenance of a proper epidermis organization. In Mus musculus (Mouse), this protein is Retroviral-like aspartic protease 1.